A 276-amino-acid chain; its full sequence is NAD kinase (276 aa).

Aspartate 68 functions as the Proton acceptor in the catalytic mechanism. NAD(+) contacts are provided by residues 68–69, arginine 73, 138–139, lysine 149, aspartate 168, 179–184, and glutamine 237; these read DG, NE, and TAYSLS.

The protein belongs to the NAD kinase family. The cofactor is a divalent metal cation.

It localises to the cytoplasm. It carries out the reaction NAD(+) + ATP = ADP + NADP(+) + H(+). In terms of biological role, involved in the regulation of the intracellular balance of NAD and NADP, and is a key enzyme in the biosynthesis of NADP. Catalyzes specifically the phosphorylation on 2'-hydroxyl of the adenosine moiety of NAD to yield NADP. This chain is NAD kinase, found in Methanopyrus kandleri (strain AV19 / DSM 6324 / JCM 9639 / NBRC 100938).